Here is a 128-residue protein sequence, read N- to C-terminus: Probable 4-amino-4-deoxy-L-arabinose-phosphoundecaprenol flippase subunit ArnF (128 aa).

The Cytoplasmic segment spans residues Met1–Gly2. A helical membrane pass occupies residues Leu3–Ala23. Residues Ala24–His32 are Periplasmic-facing. Residues Leu33–Gly53 traverse the membrane as a helical segment. The Cytoplasmic segment spans residues Leu54 to Ala76. Residues Tyr77–Trp97 form a helical membrane-spanning segment. The Periplasmic portion of the chain corresponds to Glu98–Thr100. A helical transmembrane segment spans residues Phe101–Leu121. The Cytoplasmic portion of the chain corresponds to Pro122 to Tyr128.

This sequence belongs to the ArnF family. As to quaternary structure, heterodimer of ArnE and ArnF.

The protein localises to the cell inner membrane. It participates in bacterial outer membrane biogenesis; lipopolysaccharide biosynthesis. Functionally, translocates 4-amino-4-deoxy-L-arabinose-phosphoundecaprenol (alpha-L-Ara4N-phosphoundecaprenol) from the cytoplasmic to the periplasmic side of the inner membrane. The protein is Probable 4-amino-4-deoxy-L-arabinose-phosphoundecaprenol flippase subunit ArnF of Escherichia coli O7:K1 (strain IAI39 / ExPEC).